The primary structure comprises 221 residues: Urease accessory protein UreE (221 aa).

Residues 160-194 form a disordered region; sequence VPGTNKTTGDLAEEEQETERHEPHAHAIGEHHHEK. The segment covering 177–194 has biased composition (basic and acidic residues); it reads TERHEPHAHAIGEHHHEK.

Belongs to the UreE family.

The protein localises to the cytoplasm. Its function is as follows. Involved in urease metallocenter assembly. Binds nickel. Probably functions as a nickel donor during metallocenter assembly. The protein is Urease accessory protein UreE of Bifidobacterium longum subsp. infantis (strain ATCC 15697 / DSM 20088 / JCM 1222 / NCTC 11817 / S12).